A 110-amino-acid chain; its full sequence is UPF0060 membrane protein Pmen_1247 (110 aa).

The next 4 helical transmembrane spans lie at L5 to L25, A31 to V51, A59 to E79, and M84 to A104.

Belongs to the UPF0060 family.

The protein resides in the cell inner membrane. This Ectopseudomonas mendocina (strain ymp) (Pseudomonas mendocina) protein is UPF0060 membrane protein Pmen_1247.